The following is a 268-amino-acid chain: Ribosomal RNA small subunit methyltransferase A (268 aa).

S-adenosyl-L-methionine-binding residues include Asn16, Leu18, Gly43, Glu64, Asp89, and Asn110.

The protein belongs to the class I-like SAM-binding methyltransferase superfamily. rRNA adenine N(6)-methyltransferase family. RsmA subfamily.

It localises to the cytoplasm. The enzyme catalyses adenosine(1518)/adenosine(1519) in 16S rRNA + 4 S-adenosyl-L-methionine = N(6)-dimethyladenosine(1518)/N(6)-dimethyladenosine(1519) in 16S rRNA + 4 S-adenosyl-L-homocysteine + 4 H(+). In terms of biological role, specifically dimethylates two adjacent adenosines (A1518 and A1519) in the loop of a conserved hairpin near the 3'-end of 16S rRNA in the 30S particle. May play a critical role in biogenesis of 30S subunits. This is Ribosomal RNA small subunit methyltransferase A from Pseudomonas syringae pv. syringae (strain B728a).